Here is a 238-residue protein sequence, read N- to C-terminus: DNA repair protein RecO (238 aa).

This sequence belongs to the RecO family.

Functionally, involved in DNA repair and RecF pathway recombination. The sequence is that of DNA repair protein RecO from Aliivibrio fischeri (strain ATCC 700601 / ES114) (Vibrio fischeri).